The sequence spans 306 residues: Probable C-terminal domain small phosphatase (306 aa).

Over residues methionine 1–glutamine 36 the composition is skewed to polar residues. Disordered regions lie at residues methionine 1–lysine 45 and asparagine 61–serine 116. Positions asparagine 61–tyrosine 111 are enriched in low complexity. The region spanning arginine 132 to leucine 290 is the FCP1 homology domain. The active-site 4-aspartylphosphate intermediate is the aspartate 142. Positions 142, 144, and 253 each coordinate Mg(2+). Catalysis depends on aspartate 144, which acts as the Proton donor.

As to quaternary structure, monomer. Mg(2+) serves as cofactor.

Its subcellular location is the nucleus. The enzyme catalyses O-phospho-L-seryl-[protein] + H2O = L-seryl-[protein] + phosphate. It catalyses the reaction O-phospho-L-threonyl-[protein] + H2O = L-threonyl-[protein] + phosphate. May function as a phosphatase involved in the regulation of cell growth and differentiation. The sequence is that of Probable C-terminal domain small phosphatase (fcpA) from Dictyostelium discoideum (Social amoeba).